A 362-amino-acid chain; its full sequence is 4-hydroxytryptamine kinase (362 aa).

Residues N37, K57, and Q118 to V120 each bind ATP. D224 is an active-site residue. An ATP-binding site is contributed by D249–E251.

Belongs to the methylthioribose kinase family. In terms of assembly, monomer. Mg(2+) serves as cofactor.

It catalyses the reaction 4-hydroxytryptamine + ATP = norbaeocystin + ADP + H(+). The catalysed reaction is psilocin + ATP = psilocybin + ADP + H(+). It carries out the reaction 4-hydroxy-N,N,N-trimethyltryptamine + ATP = aeruginascin + ADP + H(+). Its pathway is secondary metabolite biosynthesis. Its function is as follows. 4-hydroxytryptamine kinase; part of the gene cluster that mediates the biosynthesis of psilocybin, a psychotropic tryptamine-derived natural product. The first step in the pathway is the decarboxylation of L-tryptophan to tryptamine by the decarboxylase psiD. 4-hydroxy-L-tryptophan is accepted as substrate by psiD as well. The cytochrome P450 monooxygenase psiH then converts tryptamine to 4-hydroxytryptamine. The kinase psiK catalyzes the 4-O-phosphorylation step by converting 4-hydroxytryptamine into norbaeocystin. The methyltransferase psiM then catalyzes iterative methyl transfer to the amino group of norbaeocystin to yield psilocybin via a monomethylated intermediate, baeocystin. 4-hydroxy-6-methyl-l-tryptophancan also be converted the decarboxylase PsiD, kinase PsiK, and methyltransferase PsiM into respectively 6-methyl-norbaeocystin, 6-methylbaeocystin, and 6-methylpsilocybin. PsiK kinase can also turn psilocin into psilocybin. This activity may represent a protective mechanism to rephosphorylate the unstable psilocin to the stable psilocybin in case of intracellular ester cleavage. Moreover, psiK is able to O-phosphorylate the quaternary amine 4-hydroxy-N,N,N-trimethyltryptamine (4-OH-TMT) to yield aeruginascin, another bioactive compound found in Psilocybe species. The sequence is that of 4-hydroxytryptamine kinase from Psilocybe cubensis (Psychedelic mushroom).